Consider the following 202-residue polypeptide: Outer-membrane lipoprotein carrier protein (202 aa).

Residues Met-1–Ser-18 form the signal peptide.

Belongs to the LolA family. Monomer.

It localises to the periplasm. In terms of biological role, participates in the translocation of lipoproteins from the inner membrane to the outer membrane. Only forms a complex with a lipoprotein if the residue after the N-terminal Cys is not an aspartate (The Asp acts as a targeting signal to indicate that the lipoprotein should stay in the inner membrane). The polypeptide is Outer-membrane lipoprotein carrier protein (Legionella pneumophila (strain Paris)).